We begin with the raw amino-acid sequence, 992 residues long: MWDGPLRSRQNLRTVAKLRSSGCPLTQSAIHPTTTSPSEGETASEILQGQASAGYIEEQQLPATSSQLEMSGDSNAASDNNVVIMTKRQRDDLSQASQAEVLSRLRTEDAQGPAENNGAQSDLALHSCDMEERVDSSKLNLNHVTVNKHSPPASKSAGISQQNDDGGCGASENVDNTTTAASKQRGKLLLDSSSSNCTPKQQAQQAVTQVPEWELSHEQERIFDIVVNHRRSVFLTGGAGTGKSHLLRAIIAALPLSTTFVTATTGLAALNLGGTTLHSFSGCGFVDQHTSTHQMVYRNVLGRKKARANWRKCRVLVVDEVSMLDAWFFDMLEYVARHIRGCRKPFGGIQLVLSGDFLQLPPVNKHSPKQETRLCFEAKSWPRVNPLVCTLSHQFRQKDKEFFSLLNEVRVGALTAPSLGLLSSLSVITTVSFVDEEKLKLKREVGAEAVDIITDSKGRTRRQRQDGFTILRARRSEVDAINTEKFGELDTEIYSYKGAHRGEGHFPSDLPSTVSVRAGCRVMLLANLDLSAGLANGSIGTVESFVSSKLHQTANPSTKDDLQHLADHMMLPVVRFDHKGKQGPGDGGGAAAGRLVVIEPHRWTMRQGDSDVSCSIQIPLQLAYAITIHKSQGMSLSHVNVDFAGIFEEGQAYVALSRCTDVANLVIENFDAQRVNPNIKALAYYRALEFVGTEHREAEKKLIDNGNKMNPWGPYDVEDFEASDDDNGGAVKKEVVENLTYDAENISCMVEQFRQRYMPQYIMFSTLRRRVLSNTEDAARVKGALLVMDTTSLLALTNMTGPTSLYQTIFTERGNMMRVPRVVKEELLFLASTDVKEVSSVTTPTLHSFCSTCSSTPCSTGFSYDFVEVVSCALSIMENAKCDFLLDEQREGEANSLPPVIQEWRSLSPLLMLNSSPDTGEKDAPSVIGFGERSREQHHSTLMFASFLVSRYSGNGAVYVCTETVELAARALAIGLRVCSIAYLCNRARRVN.

A mitochondrion-targeting transit peptide spans 1–21 (MWDGPLRSRQNLRTVAKLRSS). Disordered regions lie at residues 20–43 (SSGC…GETA), 145–182 (TVNK…TAAS), and 190–209 (LDSS…AVTQ). 3 stretches are compositionally biased toward polar residues: residues 23-43 (CPLT…GETA), 173-182 (NVDNTTTAAS), and 191-208 (DSSS…QAVT). Residue 237–244 (GGAGTGKS) participates in ATP binding. A DNA-binding region spans residues 651-670 (QAYVALSRCTDVANLVIENF).

It belongs to the helicase family. PIF1 subfamily. In terms of assembly, monomer. It depends on Mg(2+) as a cofactor.

It is found in the mitochondrion matrix. The protein resides in the kinetoplast. It carries out the reaction Couples ATP hydrolysis with the unwinding of duplex DNA at the replication fork by translocating in the 5'-3' direction. This creates two antiparallel DNA single strands (ssDNA). The leading ssDNA polymer is the template for DNA polymerase III holoenzyme which synthesizes a continuous strand.. The catalysed reaction is ATP + H2O = ADP + phosphate + H(+). Its function is as follows. DNA-dependent ATPase and 5'-3' DNA helicase required for the maintenance of mitochondrial (kinetoplast) genome stability. The sequence is that of ATP-dependent DNA helicase PIF7 from Trypanosoma brucei brucei (strain 927/4 GUTat10.1).